The sequence spans 150 residues: Large ribosomal subunit protein bL9 (150 aa).

The protein belongs to the bacterial ribosomal protein bL9 family.

In terms of biological role, binds to the 23S rRNA. This Shewanella baltica (strain OS223) protein is Large ribosomal subunit protein bL9.